Consider the following 504-residue polypeptide: GTPase Obg (504 aa).

The Obg domain maps to 2 to 159 (SQFVDRVVLH…KDVTLELKSM (158 aa)). Residues 68–88 (AERGNNGAGDDRHGARGKDLT) are disordered. In terms of domain architecture, OBG-type G spans 160 to 340 (ADVGLVGFPS…LRFALMDIVR (181 aa)). GTP contacts are provided by residues 166–173 (GFPSAGKS), 191–195 (FTTLA), 212–215 (DVPG), 292–295 (NKMD), and 321–323 (STV). Residues S173 and T193 each contribute to the Mg(2+) site. The 81-residue stretch at 364–444 (KRKGRFADFE…IGGITFEWDP (81 aa)) folds into the OCT domain. Residues 449-481 (GVDQTPAYGRGKDRRLEQTDRVTAEQRKRASQA) form a disordered region. Basic and acidic residues predominate over residues 458 to 476 (RGKDRRLEQTDRVTAEQRK).

This sequence belongs to the TRAFAC class OBG-HflX-like GTPase superfamily. OBG GTPase family. Monomer. Requires Mg(2+) as cofactor.

The protein resides in the cytoplasm. Its function is as follows. An essential GTPase which binds GTP, GDP and possibly (p)ppGpp with moderate affinity, with high nucleotide exchange rates and a fairly low GTP hydrolysis rate. Plays a role in control of the cell cycle, stress response, ribosome biogenesis and in those bacteria that undergo differentiation, in morphogenesis control. The sequence is that of GTPase Obg from Corynebacterium urealyticum (strain ATCC 43042 / DSM 7109).